Here is a 115-residue protein sequence, read N- to C-terminus: Holo-[acyl-carrier-protein] synthase (115 aa).

Residues aspartate 8 and glutamate 50 each coordinate Mg(2+).

This sequence belongs to the P-Pant transferase superfamily. AcpS family. It depends on Mg(2+) as a cofactor.

It localises to the cytoplasm. It catalyses the reaction apo-[ACP] + CoA = holo-[ACP] + adenosine 3',5'-bisphosphate + H(+). Functionally, transfers the 4'-phosphopantetheine moiety from coenzyme A to a Ser of acyl-carrier-protein. The protein is Holo-[acyl-carrier-protein] synthase of Cutibacterium acnes (strain DSM 16379 / KPA171202) (Propionibacterium acnes).